Here is a 217-residue protein sequence, read N- to C-terminus: MSKITTSHVRENVKELLKYSAETKKRNFLETVELQVGLKNYDPQRDKRFSGTLKLPVCPRPNMSICIFGDAFDVDRAKSCGVDAMSVDDLKKLNKNKKLIKKLSKKYNAFIASEVLIKQVPRLLGPQLSKAGKFPTPVSHNDDLYGKVTDVRSTIKFQLKKVLCLAVAVGNVEMDEDTLVNQILMSVNFLVSLLKKNWQNVGSLVIKSTMGPAFRLY.

This sequence belongs to the universal ribosomal protein uL1 family.

This chain is Large ribosomal subunit protein uL1 (RPL10A), found in Candida glabrata (strain ATCC 2001 / BCRC 20586 / JCM 3761 / NBRC 0622 / NRRL Y-65 / CBS 138) (Yeast).